Here is a 210-residue protein sequence, read N- to C-terminus: Orotate phosphoribosyltransferase (210 aa).

5-phospho-alpha-D-ribose 1-diphosphate contacts are provided by residues R94, K98, H100, and 120-128 (EDLISTGGS). Position 124 (S124) interacts with orotate.

It belongs to the purine/pyrimidine phosphoribosyltransferase family. PyrE subfamily. In terms of assembly, homodimer. It depends on Mg(2+) as a cofactor.

It catalyses the reaction orotidine 5'-phosphate + diphosphate = orotate + 5-phospho-alpha-D-ribose 1-diphosphate. The protein operates within pyrimidine metabolism; UMP biosynthesis via de novo pathway; UMP from orotate: step 1/2. Functionally, catalyzes the transfer of a ribosyl phosphate group from 5-phosphoribose 1-diphosphate to orotate, leading to the formation of orotidine monophosphate (OMP). This Bacillus cereus (strain ATCC 14579 / DSM 31 / CCUG 7414 / JCM 2152 / NBRC 15305 / NCIMB 9373 / NCTC 2599 / NRRL B-3711) protein is Orotate phosphoribosyltransferase.